Consider the following 332-residue polypeptide: Iron-utilization periplasmic protein (332 aa).

The signal sequence occupies residues 1–23 (MQFKHFKLATLAAALAFSANSFA). Fe cation-binding residues include histidine 32, glutamate 80, tyrosine 218, and tyrosine 219.

Belongs to the bacterial solute-binding protein 1 family. The complex is composed of two ATP-binding proteins (FbpC), two transmembrane proteins (FbpB) and a solute-binding protein (FbpA).

Its subcellular location is the periplasm. Its function is as follows. Part of the ABC transporter complex FbpABC (TC 3.A.1.10.1) involved in Fe(3+) ions import. This protein specifically binds Fe(3+) and is involved in its transmembrane transport. This is Iron-utilization periplasmic protein (fbpA) from Haemophilus influenzae (strain ATCC 51907 / DSM 11121 / KW20 / Rd).